Here is a 428-residue protein sequence, read N- to C-terminus: Elongation factor 1-alpha (428 aa).

Residues K5–T225 enclose the tr-type G domain. Residues G14–S21 form a G1 region. A GTP-binding site is contributed by G14–S21. A Mg(2+)-binding site is contributed by S21. The segment at G70 to D74 is G2. The tract at residues D91–G94 is G3. GTP-binding positions include D91–H95 and N149–D152. The interval N149–D152 is G4. A G5 region spans residues A189–L191.

The protein belongs to the TRAFAC class translation factor GTPase superfamily. Classic translation factor GTPase family. EF-Tu/EF-1A subfamily.

The protein localises to the cytoplasm. The catalysed reaction is GTP + H2O = GDP + phosphate + H(+). GTP hydrolase that promotes the GTP-dependent binding of aminoacyl-tRNA to the A-site of ribosomes during protein biosynthesis. In Methanococcus maripaludis (strain C5 / ATCC BAA-1333), this protein is Elongation factor 1-alpha.